We begin with the raw amino-acid sequence, 396 residues long: Ribosomal RNA large subunit methyltransferase I (396 aa).

Residues 2–79 form the PUA domain; it reads AVRIKLKPGR…REEEIDREFF (78 aa).

It belongs to the methyltransferase superfamily. RlmI family.

It is found in the cytoplasm. It catalyses the reaction cytidine(1962) in 23S rRNA + S-adenosyl-L-methionine = 5-methylcytidine(1962) in 23S rRNA + S-adenosyl-L-homocysteine + H(+). Its function is as follows. Specifically methylates the cytosine at position 1962 (m5C1962) of 23S rRNA. This is Ribosomal RNA large subunit methyltransferase I from Shewanella sp. (strain MR-4).